Here is a 72-residue protein sequence, read N- to C-terminus: DNA-directed RNA polymerase subunit omega (72 aa).

It belongs to the RNA polymerase subunit omega family. In terms of assembly, the RNAP catalytic core consists of 2 alpha, 1 beta, 1 beta' and 1 omega subunit. When a sigma factor is associated with the core the holoenzyme is formed, which can initiate transcription.

It carries out the reaction RNA(n) + a ribonucleoside 5'-triphosphate = RNA(n+1) + diphosphate. Its function is as follows. Promotes RNA polymerase assembly. Latches the N- and C-terminal regions of the beta' subunit thereby facilitating its interaction with the beta and alpha subunits. This is DNA-directed RNA polymerase subunit omega (rpoZ) from Clostridium tetani (strain Massachusetts / E88).